The following is a 134-amino-acid chain: Small ribosomal subunit protein uS8 (134 aa).

It belongs to the universal ribosomal protein uS8 family. Part of the 30S ribosomal subunit. Contacts proteins S5 and S12.

In terms of biological role, one of the primary rRNA binding proteins, it binds directly to 16S rRNA central domain where it helps coordinate assembly of the platform of the 30S subunit. This chain is Small ribosomal subunit protein uS8, found in Thermotoga sp. (strain RQ2).